An 83-amino-acid polypeptide reads, in one-letter code: Colicin-E5 immunity protein in ColE9 (83 aa).

This chain is Colicin-E5 immunity protein in ColE9, found in Escherichia coli.